Reading from the N-terminus, the 88-residue chain is MKAIITVVGKDKSGIVAGVSGKIAELGLNIDDISQTVLDEYFTMMAVVSSDEKQDFTYLRNEFEAFGQTLNVKINIQSAAIFEAMYNI.

Residues 4-77 (IITVVGKDKS…QTLNVKINIQ (74 aa)) enclose the ACT domain.

This sequence belongs to the UPF0237 family. As to quaternary structure, homodimer.

In Streptococcus pneumoniae (strain ATCC BAA-255 / R6), this protein is UPF0237 protein spr0217.